An 820-amino-acid polypeptide reads, in one-letter code: Serine/threonine-protein phosphatase 4 regulatory subunit 3-B (820 aa).

Residues 1 to 100 (MSDTRRRVKV…DEIWEKICQV (100 aa)) form the WH1 domain. A compositionally biased stretch (acidic residues) spans 682–694 (ELWFNEDDEEEGE). Disordered stretches follow at residues 682–711 (ELWF…DFPE) and 750–820 (AANG…RLGS). The span at 701–711 (EKTKPEDDFPE) shows a compositional bias: basic and acidic residues. Polar residues-rich tracts occupy residues 750–761 (AANGANSTNSKS) and 768–790 (PATS…STKG). Acidic residues predominate over residues 798–809 (YPDDEDEEEEED).

It belongs to the SMEK family. Serine/threonine-protein phosphatase 4 (PP4) occurs in different assemblies of the catalytic and one or more regulatory subunits.

In terms of biological role, regulatory subunit of serine/threonine-protein phosphatase 4 (PP4). The protein is Serine/threonine-protein phosphatase 4 regulatory subunit 3-B of Xenopus laevis (African clawed frog).